The chain runs to 169 residues: Secreted RxLR effector protein BLN03 (169 aa).

The N-terminal stretch at 1–21 (MRPRKYIVVVLLSIAYTMCLA) is a signal peptide. Positions 51 to 54 (TEER) match the dEER motif. The helical transmembrane segment at 149–169 (GSAFLFVIGFIVLLAFAMTAV) threads the bilayer.

It belongs to the RxLR effector family. As to quaternary structure, interacts with host transcription factor NAC069.

It is found in the secreted. The protein localises to the host membrane. In terms of biological role, secreted effector that inhibits stress-induced relocalization of the endoplasmic reticulum tail-anchored transcription factors to the nucleus, thus affecting stress responses. The chain is Secreted RxLR effector protein BLN03 from Bremia lactucae (Lettuce downy mildew).